Here is a 490-residue protein sequence, read N- to C-terminus: MGARCSKFSFCLFPSHFKSASVLESPDIENGGKVWPTFKEFKLEQLKSATGGFSSDNIVSEHGEKAPNVVYRGRLDDGRLIAVKRFNRLAWADHRQFLDEAKAVGSLRSDRLANLIGCCFEGEERLLVAEFMPHETLAKHLFHWENNPMKWAMRLRVALCLAQALEYCSNKGRALYHDLNAYRVLFDKDGNPRLSCFGLMKNSRDGKSYSTNLAFTPPEYLRTGRVTPESVVFSFGTVLLDLMSGKHIPPSHALDLIRGKNCAMLMDSALEGHFSNEDGTELVRLATRCLQYEARERPNVKSLVTSLVTLQKESDVASYVLMGIPHETEAEEESPLSLTPFGDACLRVDLTAIQEILSKIGYKDDEGIANELSFQMWTNQMQESLNSKKQGDLAFRSKDFTTAVDCYTQFIDGGTMVSPTVHARRCLSYLMNDNAQEALTDALQAQVVSPDWPTALYLQAACLFKLGMEADAQQALKDGTTLEAKKSNKR.

Residue Gly-2 is the site of N-myristoyl glycine attachment. The residue at position 25 (Ser-25) is a Phosphoserine. In terms of domain architecture, Protein kinase spans 56 to 310 (DNIVSEHGEK…KSLVTSLVTL (255 aa)). ATP is bound by residues 62 to 70 (HGEKAPNVV) and Lys-84. The Proton acceptor role is filled by Asp-178. At Ser-373 the chain carries Phosphoserine.

This sequence belongs to the protein kinase superfamily. Ser/Thr protein kinase family. As to quaternary structure, interacts with BRI1, ASK7/BIN2, ASK9/BIL2, BSK1, BSK5, BSK8 and BSK11. Post-translationally, phosphorylated by BRI1, ASK7/BIN2 and ASK9/BIL2.

Its subcellular location is the cell membrane. It catalyses the reaction L-seryl-[protein] + ATP = O-phospho-L-seryl-[protein] + ADP + H(+). The catalysed reaction is L-threonyl-[protein] + ATP = O-phospho-L-threonyl-[protein] + ADP + H(+). In terms of biological role, probable serine/threonine kinase that acts as a positive regulator of brassinosteroid (BR) signaling downstream of the receptor kinase BRI1. Functions redundantly with BSK3, BSK4, BSK7 and BSK8. This is Serine/threonine-protein kinase BSK6 from Arabidopsis thaliana (Mouse-ear cress).